Consider the following 144-residue polypeptide: Maximins 1/H12 (144 aa).

The signal sequence occupies residues 1–18 (MNFKYIVAVSFLIASAYA). A propeptide spanning residues 19-43 (RSEENDEQSLSQRDVLEEESLREIR) is cleaved from the precursor. Asparagine amide is present on N70. Residues 74–123 (TAEEHEVMKRLEVVMRDLDSLDYPEEASERETRDFNQEEIANLYTKKEKR) constitute a propeptide that is removed on maturation. At I143 the chain carries Isoleucine amide.

This sequence belongs to the bombinin family. Expressed by the skin glands.

It localises to the secreted. Functionally, maximin-1 shows antibacterial activity against both Gram-positive and Gram-negative bacteria. It also shows antimicrobial activity against the fungus C.albicans, but not against A.flavus nor P.uticale. It has little hemolytic activity. It possess a significant cytotoxicity against tumor cell lines. It does not possess a significant anti-HIV activity. It shows high spermicidal activity. Maximin-H12 shows antimicrobial activity against bacteria and against the fungus C.albicans. Shows strong hemolytic activity. The sequence is that of Maximins 1/H12 from Bombina maxima (Giant fire-bellied toad).